The chain runs to 123 residues: Major pollen allergen Ole e 10 (123 aa).

The first 21 residues, Met1–Thr21, serve as a signal peptide directing secretion. Residues Met1–Trp37 are disordered. An intrachain disulfide couples Cys38 to Cys101.

The N-terminus is blocked. In terms of processing, phosphorylated at Ser-24 when expressed as a recombinant protein in a heterologous system. Post-translationally, not glycosylated. Contains two additional disulfide bonds. As to expression, expressed in mature and germinating pollen.

The protein localises to the cytoplasmic vesicle. Carbohydrate-binding protein binding preferentially 1,3-beta-glucans. May be involved in pollen tube wall re-formation during germination. This Olea europaea (Common olive) protein is Major pollen allergen Ole e 10.